A 242-amino-acid polypeptide reads, in one-letter code: 1-(5-phosphoribosyl)-5-[(5-phosphoribosylamino)methylideneamino] imidazole-4-carboxamide isomerase (242 aa).

Aspartate 8 functions as the Proton acceptor in the catalytic mechanism. Aspartate 129 acts as the Proton donor in catalysis.

Belongs to the HisA/HisF family.

It localises to the cytoplasm. It catalyses the reaction 1-(5-phospho-beta-D-ribosyl)-5-[(5-phospho-beta-D-ribosylamino)methylideneamino]imidazole-4-carboxamide = 5-[(5-phospho-1-deoxy-D-ribulos-1-ylimino)methylamino]-1-(5-phospho-beta-D-ribosyl)imidazole-4-carboxamide. It functions in the pathway amino-acid biosynthesis; L-histidine biosynthesis; L-histidine from 5-phospho-alpha-D-ribose 1-diphosphate: step 4/9. The polypeptide is 1-(5-phosphoribosyl)-5-[(5-phosphoribosylamino)methylideneamino] imidazole-4-carboxamide isomerase (Clostridium botulinum (strain Langeland / NCTC 10281 / Type F)).